Consider the following 938-residue polypeptide: Isoleucine--tRNA ligase (938 aa).

Positions 58-68 match the 'HIGH' region motif; sequence PYANGSIHIGH. K183 carries the post-translational modification N6-acetyllysine. Position 561 (E561) interacts with L-isoleucyl-5'-AMP. Positions 602-606 match the 'KMSKS' region motif; that stretch reads KMSKS. K605 lines the ATP pocket. Zn(2+) is bound by residues C901, C904, C921, and C924.

This sequence belongs to the class-I aminoacyl-tRNA synthetase family. IleS type 1 subfamily. Monomer. Zn(2+) serves as cofactor.

Its subcellular location is the cytoplasm. It catalyses the reaction tRNA(Ile) + L-isoleucine + ATP = L-isoleucyl-tRNA(Ile) + AMP + diphosphate. Functionally, catalyzes the attachment of isoleucine to tRNA(Ile). As IleRS can inadvertently accommodate and process structurally similar amino acids such as valine, to avoid such errors it has two additional distinct tRNA(Ile)-dependent editing activities. One activity is designated as 'pretransfer' editing and involves the hydrolysis of activated Val-AMP. The other activity is designated 'posttransfer' editing and involves deacylation of mischarged Val-tRNA(Ile). This chain is Isoleucine--tRNA ligase, found in Escherichia coli (strain ATCC 8739 / DSM 1576 / NBRC 3972 / NCIMB 8545 / WDCM 00012 / Crooks).